Consider the following 954-residue polypeptide: ATPase 9, plasma membrane-type (954 aa).

Residues 1–66 lie on the Cytoplasmic side of the membrane; the sequence is MAGNKDSSWD…EKKENKVLKF (66 aa). A helical membrane pass occupies residues 67–86; the sequence is LGFMWNPLSWVMELAAIMAI. The Extracellular portion of the chain corresponds to 87-98; that stretch reads ALANGGGRPPDW. A helical transmembrane segment spans residues 99–119; it reads QDFVGITVLLIINSTISFIEE. Residues 120–248 are Cytoplasmic-facing; the sequence is NNAGNAAAAL…GHFQKVLTAI (129 aa). A helical transmembrane segment spans residues 249-269; that stretch reads GNFCICSIAIGMLIEIVVMYP. Residues 270–278 lie on the Extracellular side of the membrane; that stretch reads IQKRAYRDG. A helical membrane pass occupies residues 279-296; the sequence is IDNLLVLLIGGIPIAMPT. Topologically, residues 297–648 are cytoplasmic; it reads VLSVTMAIGS…TSRAIFQRMK (352 aa). The active-site 4-aspartylphosphate intermediate is aspartate 334. Aspartate 593 and aspartate 597 together coordinate Mg(2+). Residues 649-670 traverse the membrane as a helical segment; it reads NYTIYAVSITIRIVMGFMLLAL. Topologically, residues 671-675 are extracellular; it reads IWKFD. The helical transmembrane segment at 676-698 threads the bilayer; sequence FSPFMVLIVAILNDGTIMTISKD. Residues 699–714 lie on the Cytoplasmic side of the membrane; the sequence is RVKPSPLPDSWKLKEI. A helical transmembrane segment spans residues 715–735; that stretch reads FATGVVLGTYLAVMTVVFFWA. Topologically, residues 736-756 are extracellular; it reads AESTDFFSAKFGVRSISGNPH. A helical membrane pass occupies residues 757 to 777; the sequence is ELTAAVYLQVSIVSQALIFVT. At 778 to 789 the chain is on the cytoplasmic side; that stretch reads RSRSWSYVERPG. Residues 790–810 form a helical membrane-spanning segment; it reads FWLISAFFMAQLIATLIAVYA. Topologically, residues 811–818 are extracellular; that stretch reads NWNFARIR. The helical transmembrane segment at 819 to 839 threads the bilayer; it reads GIGWGWAGVIWLYSIVFYIPL. Topologically, residues 840 to 954 are cytoplasmic; that stretch reads DILKFIIRYS…IEAIQQHYTL (115 aa). Position 886 is a phosphothreonine (threonine 886). Serine 936 is subject to Phosphoserine. Residues 952–954 are interaction with 14-3-3 proteins; sequence YTL. Threonine 953 carries the post-translational modification Phosphothreonine.

This sequence belongs to the cation transport ATPase (P-type) (TC 3.A.3) family. Type IIIA subfamily. Binds to 14-3-3 proteins. The binding is induced by phosphorylation of Thr-953. Binding to 14-3-3 proteins activates the H(+)-ATPase. As to expression, anther specific. Expressed in guard cells.

The protein resides in the membrane. The enzyme catalyses ATP + H2O + H(+)(in) = ADP + phosphate + 2 H(+)(out). Its function is as follows. The plasma membrane H(+) ATPase of plants and fungi generates a proton gradient that drives the active transport of nutrients by H(+)-symport. The resulting external acidification and/or internal alkinization may mediate growth responses. This is ATPase 9, plasma membrane-type (AHA9) from Arabidopsis thaliana (Mouse-ear cress).